A 110-amino-acid polypeptide reads, in one-letter code: U1-lycotoxin-Ls1jj (110 aa).

An N-terminal signal peptide occupies residues 1–20 (MKFVLLFGVLLVTLFSYSSA). A propeptide spanning residues 21–44 (EMLDDFDQADEDELLSLIEKEEAR) is cleaved from the precursor. Cystine bridges form between C47/C62, C54/C71, C61/C89, and C73/C87.

The protein belongs to the neurotoxin 19 (CSTX) family. 03 subfamily. As to expression, expressed by the venom gland.

The protein resides in the secreted. This chain is U1-lycotoxin-Ls1jj, found in Lycosa singoriensis (Wolf spider).